We begin with the raw amino-acid sequence, 160 residues long: S-ribosylhomocysteine lyase (160 aa).

Residues His-57, His-61, and Cys-127 each contribute to the Fe cation site.

It belongs to the LuxS family. Homodimer. It depends on Fe cation as a cofactor.

It carries out the reaction S-(5-deoxy-D-ribos-5-yl)-L-homocysteine = (S)-4,5-dihydroxypentane-2,3-dione + L-homocysteine. Involved in the synthesis of autoinducer 2 (AI-2) which is secreted by bacteria and is used to communicate both the cell density and the metabolic potential of the environment. The regulation of gene expression in response to changes in cell density is called quorum sensing. Catalyzes the transformation of S-ribosylhomocysteine (RHC) to homocysteine (HC) and 4,5-dihydroxy-2,3-pentadione (DPD). This Streptococcus mutans serotype c (strain ATCC 700610 / UA159) protein is S-ribosylhomocysteine lyase.